Reading from the N-terminus, the 187-residue chain is MDLENLAEETRIVLADLIKRSDIKKGQIFVLGLSSSEVAGGVIGKNSNLDIGEVIVKTILTYLNDRGIYLAVQGCEHLNRALVVERELADKRNLEIVNVLPNLHAGGSGQLAAFKYMKDPVEVEEIVADAGLDIGDTAIGMHVKRVQVPLRPLLRELEGAHLTALASRPKLIGGSRASYQPDPIRKF.

The protein belongs to the UPF0340 family.

The sequence is that of UPF0340 protein SMU_87 from Streptococcus mutans serotype c (strain ATCC 700610 / UA159).